Here is a 101-residue protein sequence, read N- to C-terminus: Small ubiquitin-related modifier 1 (101 aa).

An N-acetylserine modification is found at Ser2. Ser2 is modified (phosphoserine). Lys7 is covalently cross-linked (Glycyl lysine isopeptide (Lys-Gly) (interchain with G-Cter in SUMO1); alternate). Lys7 participates in a covalent cross-link: Glycyl lysine isopeptide (Lys-Gly) (interchain with G-Cter in SUMO2); alternate. Ser9 carries the phosphoserine modification. Glycyl lysine isopeptide (Lys-Gly) (interchain with G-Cter in SUMO2) cross-links involve residues Lys16, Lys17, and Lys23. The (Microbial infection) Interaction with Tula hantavirus stretch occupies residues 16–25 (KKEGEYIKLK). The region spanning 20–97 (EYIKLKVIGQ…IEVYQEQTGG (78 aa)) is the Ubiquitin-like domain. Residue Lys25 forms a Glycyl lysine isopeptide (Lys-Gly) (interchain with G-Cter in SUMO1) linkage. Ser32 bears the Phosphoserine mark. Residues Lys37, Lys39, Lys45, and Lys46 each participate in a glycyl lysine isopeptide (Lys-Gly) (interchain with G-Cter in SUMO2) cross-link. The tract at residues 37-40 (KVKM) is (Microbial infection) Interaction with Tula hantavirus. Gly97 participates in a covalent cross-link: Glycyl lysine isopeptide (Gly-Lys) (interchain with K-? in acceptor proteins). Positions 98–101 (HSTV) are excised as a propeptide.

This sequence belongs to the ubiquitin family. SUMO subfamily. In terms of assembly, covalently attached to KCNB1; UBE2I increases cross-linking with KCNB1 and PIAS1 decreases cross-links with KCNB1. Interacts with SAE2, RANBP2, PIAS1 and PIAS2. Interacts with PRKN. Covalently attached to a number of proteins such as IKFZ1, PML, RANGAP1, HIPK2, SP100, p53, p73-alpha, MDM2, JUN, DNMT3B and TDG. Also interacts with HIF1A, HIPK2, HIPK3, CHD3, EXOSC9, RAD51 and RAD52. Interacts with USP25 (via ts SIM domain); the interaction weakly sumoylates USP25. Interacts with SIMC1, CASP8AP2, RNF111 and SOBP (via SIM domains). Interacts with BHLHE40/DEC1. Interacts with RWDD3. Interacts with UBE2I/UBC9 and this interaction is enhanced in the presence of RWDD3. Interacts with MTA1. Interacts with SENP2. Interacts with HINT1. (Microbial infection) Interacts with Epstein-barr virus BGLF4. As to quaternary structure, (Microbial infection) Interacts (via N-terminus) with Tula hantavirus nucleoprotein. In terms of assembly, (Microbial infection) Interacts (via N-terminus) with Hantaan hantavirus nucleoprotein. Post-translationally, cleavage of precursor form by SENP1 or SENP2 is necessary for function. In terms of processing, polymeric SUMO1 chains undergo polyubiquitination by RNF4.

Its subcellular location is the nucleus membrane. It is found in the nucleus speckle. The protein localises to the cytoplasm. The protein resides in the nucleus. It localises to the PML body. Its subcellular location is the cell membrane. Its function is as follows. Ubiquitin-like protein that can be covalently attached to proteins as a monomer or a lysine-linked polymer. Covalent attachment via an isopeptide bond to its substrates requires prior activation by the E1 complex SAE1-SAE2 and linkage to the E2 enzyme UBE2I, and can be promoted by E3 ligases such as PIAS1-4, RANBP2 or CBX4. This post-translational modification on lysine residues of proteins plays a crucial role in a number of cellular processes such as nuclear transport, DNA replication and repair, mitosis and signal transduction. Involved for instance in targeting RANGAP1 to the nuclear pore complex protein RANBP2. Covalently attached to the voltage-gated potassium channel KCNB1; this modulates the gating characteristics of KCNB1. Polymeric SUMO1 chains are also susceptible to polyubiquitination which functions as a signal for proteasomal degradation of modified proteins. May also regulate a network of genes involved in palate development. Covalently attached to ZFHX3. This is Small ubiquitin-related modifier 1 (SUMO1) from Homo sapiens (Human).